The sequence spans 177 residues: ATP synthase subunit delta (177 aa).

It belongs to the ATPase delta chain family. In terms of assembly, F-type ATPases have 2 components, F(1) - the catalytic core - and F(0) - the membrane proton channel. F(1) has five subunits: alpha(3), beta(3), gamma(1), delta(1), epsilon(1). F(0) has three main subunits: a(1), b(2) and c(10-14). The alpha and beta chains form an alternating ring which encloses part of the gamma chain. F(1) is attached to F(0) by a central stalk formed by the gamma and epsilon chains, while a peripheral stalk is formed by the delta and b chains.

Its subcellular location is the cell inner membrane. In terms of biological role, f(1)F(0) ATP synthase produces ATP from ADP in the presence of a proton or sodium gradient. F-type ATPases consist of two structural domains, F(1) containing the extramembraneous catalytic core and F(0) containing the membrane proton channel, linked together by a central stalk and a peripheral stalk. During catalysis, ATP synthesis in the catalytic domain of F(1) is coupled via a rotary mechanism of the central stalk subunits to proton translocation. This protein is part of the stalk that links CF(0) to CF(1). It either transmits conformational changes from CF(0) to CF(1) or is implicated in proton conduction. The polypeptide is ATP synthase subunit delta (Salmonella agona (strain SL483)).